Here is a 161-residue protein sequence, read N- to C-terminus: Peripheral myelin protein 22 (161 aa).

Residue methionine 1 is a topological domain, cytoplasmic. A helical membrane pass occupies residues 2 to 31; that stretch reads LLLLLGILFLHIAVLVLLFVSTIVSQWLVG. Topologically, residues 32–64 are extracellular; it reads NGHTTDLWQNCTTSALGAVQHCYSSSVSEWLQS. The N-linked (GlcNAc...) asparagine glycan is linked to asparagine 41. The chain crosses the membrane as a helical span at residues 65–91; that stretch reads VQATMILSVIFSVLALFLFFCQLFTLT. Residues 92–95 lie on the Cytoplasmic side of the membrane; that stretch reads KGGR. A helical membrane pass occupies residues 96-119; it reads FYITGFFQILAGLCVMSAAAIYTV. Topologically, residues 120-133 are extracellular; that stretch reads RHSEWHVNTDYSYG. Residues 134-156 form a helical membrane-spanning segment; that stretch reads FAYILAWVAFPLALLSGIIYVIL. The Cytoplasmic segment spans residues 157–160; that stretch reads RKRE.

Belongs to the PMP-22/EMP/MP20 family. In terms of processing, ubiquitinated by the DCX(DCAF13) E3 ubiquitin ligase complex, leading to its degradation. Schwann cells of the peripheral nervous system. Expressed at growth arrest of mammalian fibroblasts.

It localises to the cell membrane. In terms of biological role, might be involved in growth regulation, and in myelinization in the peripheral nervous system. This chain is Peripheral myelin protein 22 (Pmp22), found in Mus musculus (Mouse).